The primary structure comprises 635 residues: ATP-binding protein Uup (635 aa).

2 ABC transporter domains span residues 1 to 253 (MSLI…RVEE) and 320 to 546 (FEME…KTEE). ATP is bound by residues 36–43 (GRNGAGKS) and 352–359 (GPNGCGKT). The interval 551-635 (KAETVKRSSS…EYLEALKNGG (85 aa)) is C-terminal domain (CTD), binds DNA, required to complement a deletion mutant. Residues 563–631 (SYKLQRELEQ…FERWEYLEAL (69 aa)) adopt a coiled-coil conformation.

This sequence belongs to the ABC transporter superfamily. ABCF family. Uup subfamily.

The protein resides in the cytoplasm. It carries out the reaction ATP + H2O = ADP + phosphate + H(+). With respect to regulation, ATPase activity inhibited by N-ethylmaleimide but not by vanadate. Probably plays a role in ribosome assembly or function; overexpression suppresses cold-sensitive growth of a bipA deletion. May be involved in resolution of branched DNA intermediates that result from template switching in postreplication gaps. Binds DNA at Holliday junctions. May be involved in the correct segregation of nucleoids. Has ATPase activity, binds DNA non-sequence specifically; the presence of DNA does not change the ATPase activity. Mutations in this gene cause an increase in RecA-independent precise excision of transposons and insertion elements, and also reduce bacteriophage Mu growth. Genetic interactions among priB, dam, lexA, nagC, polA, rdgB, rdgB, rep and uup link the PriA-PriB replication restart pathway to DNA double-strand break repair. The protein is ATP-binding protein Uup of Escherichia coli (strain K12).